We begin with the raw amino-acid sequence, 648 residues long: Macrolide export ATP-binding/permease protein MacB (648 aa).

Positions 5 to 243 constitute an ABC transporter domain; the sequence is LELCNVSRSY…QGVDAAVVNT (239 aa). ATP is bound at residue 41–48; sequence GVSGSGKS. 5 helical membrane passes run 273-293, 417-437, 523-543, 577-597, and 611-631; these read LLTM…VVVG, ANVV…IGVA, LFLT…VMNI, VLVC…IAFM, and LTAL…FGWL.

It belongs to the ABC transporter superfamily. Macrolide exporter (TC 3.A.1.122) family. As to quaternary structure, homodimer. Part of the tripartite efflux system MacAB-TolC, which is composed of an inner membrane transporter, MacB, a periplasmic membrane fusion protein, MacA, and an outer membrane component, TolC. The complex forms a large protein conduit and can translocate molecules across both the inner and outer membranes. Interacts with MacA.

It is found in the cell inner membrane. Functionally, part of the tripartite efflux system MacAB-TolC. MacB is a non-canonical ABC transporter that contains transmembrane domains (TMD), which form a pore in the inner membrane, and an ATP-binding domain (NBD), which is responsible for energy generation. Confers resistance against macrolides. The sequence is that of Macrolide export ATP-binding/permease protein MacB from Salmonella choleraesuis (strain SC-B67).